A 106-amino-acid chain; its full sequence is YLFLFRFIGVDTLRRSKPPIRLNTLIPVAKVFGANFSFASLRLEILIFSGLTGWNSKSKASHVYSSSVGYSSNSIASLSIIVSNTSSRNGSWISTNRTPICLSPIV.

The protein resides in the mitochondrion. This is an uncharacterized protein from Claviceps purpurea (Ergot fungus).